A 118-amino-acid polypeptide reads, in one-letter code: Large ribosomal subunit protein bL20 (118 aa).

This sequence belongs to the bacterial ribosomal protein bL20 family.

Functionally, binds directly to 23S ribosomal RNA and is necessary for the in vitro assembly process of the 50S ribosomal subunit. It is not involved in the protein synthesizing functions of that subunit. In Leptothrix cholodnii (strain ATCC 51168 / LMG 8142 / SP-6) (Leptothrix discophora (strain SP-6)), this protein is Large ribosomal subunit protein bL20.